We begin with the raw amino-acid sequence, 68 residues long: Conotoxin Lt5.11 (68 aa).

The N-terminal stretch at 1 to 19 (MLCLPVFIILLLLASPAAP) is a signal peptide. Positions 20 to 54 (KSLETRIQNDLIRAGLTDADLKTEKGFLSGLLNVA) are excised as a propeptide.

The protein belongs to the conotoxin T superfamily. In terms of processing, contains 2 disulfide bonds that can be either 'C1-C3, C2-C4' or 'C1-C4, C2-C3', since these disulfide connectivities have been observed for conotoxins with cysteine framework V (for examples, see AC P0DQQ7 and AC P81755). Expressed by the venom duct.

Its subcellular location is the secreted. The chain is Conotoxin Lt5.11 from Conus litteratus (Lettered cone).